Here is a 294-residue protein sequence, read N- to C-terminus: uncharacterized protein (294 aa).

Catalysis depends on charge relay system residues Thr-43 and Tyr-104. The active-site Proton donor is the Tyr-130. Lys-158 serves as the catalytic Schiff-base intermediate with substrate.

It belongs to the DapA family. In terms of assembly, homotetramer.

It localises to the cytoplasm. This is an uncharacterized protein from Pyrococcus abyssi (strain GE5 / Orsay).